The chain runs to 620 residues: Chaperone protein HscA homolog (620 aa).

The protein belongs to the heat shock protein 70 family.

Functionally, chaperone involved in the maturation of iron-sulfur cluster-containing proteins. Has a low intrinsic ATPase activity which is markedly stimulated by HscB. This is Chaperone protein HscA homolog from Pseudomonas fluorescens (strain SBW25).